Consider the following 113-residue polypeptide: MVVNPLTKIGLTSQDSHSMGTFAALKIFFTDLEISGPIPSPSMNETVYLPVEGLGLPVYLPIEGCFTVAKNLLEVFLKKVFLNIIKKYYNCCSFPICILLSTKVIQVQKKCIQ.

This Saccharomyces cerevisiae (strain ATCC 204508 / S288c) (Baker's yeast) protein is Putative increased recombination centers protein 14 (IRC14).